Consider the following 807-residue polypeptide: Putative transmembrane protein ORF807 (807 aa).

5 consecutive transmembrane segments (helical) span residues Val-210 to Leu-230, Gly-234 to Phe-254, Val-270 to Leu-290, Ile-459 to Thr-479, and Val-657 to Val-677.

The protein localises to the host membrane. The polypeptide is Putative transmembrane protein ORF807 (Acidianus filamentous virus 1 (isolate United States/Yellowstone) (AFV-1)).